A 433-amino-acid polypeptide reads, in one-letter code: Glutamate-1-semialdehyde 2,1-aminomutase (433 aa).

Position 265 is an N6-(pyridoxal phosphate)lysine (Lys265).

The protein belongs to the class-III pyridoxal-phosphate-dependent aminotransferase family. HemL subfamily. As to quaternary structure, homodimer. Requires pyridoxal 5'-phosphate as cofactor.

It localises to the cytoplasm. It carries out the reaction (S)-4-amino-5-oxopentanoate = 5-aminolevulinate. It functions in the pathway porphyrin-containing compound metabolism; protoporphyrin-IX biosynthesis; 5-aminolevulinate from L-glutamyl-tRNA(Glu): step 2/2. The sequence is that of Glutamate-1-semialdehyde 2,1-aminomutase from Shewanella denitrificans (strain OS217 / ATCC BAA-1090 / DSM 15013).